We begin with the raw amino-acid sequence, 321 residues long: Lipoyl synthase (321 aa).

[4Fe-4S] cluster-binding residues include Cys68, Cys73, Cys79, Cys94, Cys98, Cys101, and Ser308. The region spanning 80 to 297 is the Radical SAM core domain; sequence FNHGTATFMI…KALADELGFT (218 aa).

It belongs to the radical SAM superfamily. Lipoyl synthase family. It depends on [4Fe-4S] cluster as a cofactor.

The protein resides in the cytoplasm. The catalysed reaction is [[Fe-S] cluster scaffold protein carrying a second [4Fe-4S](2+) cluster] + N(6)-octanoyl-L-lysyl-[protein] + 2 oxidized [2Fe-2S]-[ferredoxin] + 2 S-adenosyl-L-methionine + 4 H(+) = [[Fe-S] cluster scaffold protein] + N(6)-[(R)-dihydrolipoyl]-L-lysyl-[protein] + 4 Fe(3+) + 2 hydrogen sulfide + 2 5'-deoxyadenosine + 2 L-methionine + 2 reduced [2Fe-2S]-[ferredoxin]. Its pathway is protein modification; protein lipoylation via endogenous pathway; protein N(6)-(lipoyl)lysine from octanoyl-[acyl-carrier-protein]: step 2/2. In terms of biological role, catalyzes the radical-mediated insertion of two sulfur atoms into the C-6 and C-8 positions of the octanoyl moiety bound to the lipoyl domains of lipoate-dependent enzymes, thereby converting the octanoylated domains into lipoylated derivatives. In Shewanella baltica (strain OS223), this protein is Lipoyl synthase.